Consider the following 446-residue polypeptide: Sorting nexin-30 (446 aa).

Positions 1-18 (MSGSSTPKSLPTSGQQSL) are enriched in polar residues. Residues 1–84 (MSGSSTPKSL…SSPASSSSLL (84 aa)) are disordered. Low complexity predominate over residues 70-84 (TPADTSSPASSSSLL). Residues 98-219 (RDLFVTVDDP…VFLTAKDLNS (122 aa)) form the PX domain. Arg141, Gln143, Lys171, and Arg185 together coordinate a 1,2-diacyl-sn-glycero-3-phospho-(1D-myo-inositol-3-phosphate). Positions 243–446 (KLRNRPVEFA…PLLQDKQEPK (204 aa)) constitute a BAR domain.

It belongs to the sorting nexin family.

Its subcellular location is the early endosome membrane. In terms of biological role, involved in the regulation of endocytosis and in several stages of intracellular trafficking. Together with snx4, involved in autophagosome assembly. The chain is Sorting nexin-30 (snx30) from Xenopus tropicalis (Western clawed frog).